The sequence spans 583 residues: Inactive tyrosine-protein kinase RYK (583 aa).

A signal peptide spans 1 to 18; that stretch reads MILRYLIFFAQLWALCLA. Over 19-173 the chain is Extracellular; sequence NVNMFISKEE…EVDDTDSIDK (155 aa). A WIF domain is found at 22-147; it reads MFISKEEMNR…KVKLRQEKIC (126 aa). Residues N30 and N46 are each glycosylated (N-linked (GlcNAc...) asparagine). A disulfide bridge links C113 with C147. A helical transmembrane segment spans residues 174-194; it reads AFFVIICIAAAFLLIVAATLI. At 195 to 583 the chain is on the cytoplasmic side; sequence CYFKRSKKED…DFNIQLSQYI (389 aa). The 303-residue stretch at 281-583 folds into the Protein kinase domain; sequence FQSLPLDMEG…DFNIQLSQYI (303 aa). ATP is bound by residues 287–295 and K327; that span reads DMEGTFGEV.

Belongs to the protein kinase superfamily. Tyr protein kinase family.

It localises to the cell membrane. It is found in the basolateral cell membrane. Has no detectable kinase activity in vitro and is unlikely to function as a tyrosine kinase in vivo. Receptor which may act as a receptor for Wnt ligand mom-2. Plays a role in controlling P7.p vulva precursor cell lineage orientation during vulva development. Regulates pop-1 asymmetric distribution in P7.p and its daughter cells. Plays a role in the migration of ALM neurons during embryogenesis. The chain is Inactive tyrosine-protein kinase RYK from Caenorhabditis elegans.